Here is a 382-residue protein sequence, read N- to C-terminus: U11/U12 small nuclear ribonucleoprotein 59 kDa protein (382 aa).

Residues 31 to 63 (NTKNITDQLKQLQDTLNLAKSMEKELEALKMIK) are a coiled coil. Residues 274-297 (SEENTTLTTSNKTNNDTDKDSNTN) form a disordered region. Residues 277 to 287 (NTTLTTSNKTN) are compositionally biased toward low complexity.

In terms of assembly, component of the U11/U12 snRNPs that are part of the U12-type spliceosome.

Its subcellular location is the nucleus. In Arabidopsis thaliana (Mouse-ear cress), this protein is U11/U12 small nuclear ribonucleoprotein 59 kDa protein (SNRNP59).